The following is a 1040-amino-acid chain: Multidrug resistance protein MdtB (1040 aa).

The next 12 membrane-spanning stretches (helical) occupy residues 16–36 (FIMR…AGII), 347–367 (LMMA…NIPA), 369–389 (IIPG…MVFL), 396–416 (LTLM…IVVI), 440–460 (IGFT…PLLF), 472–492 (FAIT…TLTP), 537–557 (WLTL…WVFI), 863–883 (LGST…VLGI), 888–908 (FIHP…ALLA), 911–931 (IAGS…IGIV), 968–988 (ILMT…STGV), and 998–1018 (IGMV…TPVI).

This sequence belongs to the resistance-nodulation-cell division (RND) (TC 2.A.6) family. MdtB subfamily. Part of a tripartite efflux system composed of MdtA, MdtB and MdtC. MdtB forms a heteromultimer with MdtC.

It localises to the cell inner membrane. Functionally, the MdtABC tripartite complex confers resistance against novobiocin and deoxycholate. This Escherichia coli O8 (strain IAI1) protein is Multidrug resistance protein MdtB.